The sequence spans 266 residues: Putative carbamate hydrolase RutD (266 aa).

The protein belongs to the AB hydrolase superfamily. Hydrolase RutD family.

It carries out the reaction carbamate + 2 H(+) = NH4(+) + CO2. In terms of biological role, involved in pyrimidine catabolism. May facilitate the hydrolysis of carbamate, a reaction that can also occur spontaneously. The polypeptide is Putative carbamate hydrolase RutD (Escherichia coli O127:H6 (strain E2348/69 / EPEC)).